The following is a 901-amino-acid chain: Viral-enhancing factor (901 aa).

A Peptidase M60 domain is found at His27–Arg330. 10 N-linked (GlcNAc...) asparagine; by host glycosylation sites follow: Asn65, Asn265, Asn339, Asn349, Asn540, Asn594, Asn595, Asn642, Asn683, and Asn698.

Involved in disruption of the peritrophic membrane and fusion of nucleocapsids with midgut cells. This Trichoplusia ni (Cabbage looper) protein is Viral-enhancing factor (VEF).